A 474-amino-acid polypeptide reads, in one-letter code: Glutamyl-tRNA(Gln) amidotransferase subunit A (474 aa).

Catalysis depends on charge relay system residues Lys76 and Ser151. Ser175 serves as the catalytic Acyl-ester intermediate.

This sequence belongs to the amidase family. GatA subfamily. As to quaternary structure, heterotrimer of A, B and C subunits.

It catalyses the reaction L-glutamyl-tRNA(Gln) + L-glutamine + ATP + H2O = L-glutaminyl-tRNA(Gln) + L-glutamate + ADP + phosphate + H(+). In terms of biological role, allows the formation of correctly charged Gln-tRNA(Gln) through the transamidation of misacylated Glu-tRNA(Gln) in organisms which lack glutaminyl-tRNA synthetase. The reaction takes place in the presence of glutamine and ATP through an activated gamma-phospho-Glu-tRNA(Gln). The polypeptide is Glutamyl-tRNA(Gln) amidotransferase subunit A (Chlorobium limicola (strain DSM 245 / NBRC 103803 / 6330)).